A 257-amino-acid polypeptide reads, in one-letter code: Receptor expression-enhancing protein 4 (257 aa).

2 consecutive transmembrane segments (helical) span residues 1–21 (MVSW…CPAY) and 42–62 (WIVF…ISWF). Residues Ser-152 and Ser-194 each carry the phosphoserine modification. Residues 178–257 (PHQRPPIGYR…KKTVPSDMDS (80 aa)) are disordered. At Thr-196 the chain carries Phosphothreonine. A Phosphoserine modification is found at Ser-202. Thr-250 carries the post-translational modification Phosphothreonine. Ser-253 carries the post-translational modification Phosphoserine.

Belongs to the DP1 family.

The protein localises to the endoplasmic reticulum membrane. In terms of biological role, microtubule-binding protein required to ensure proper cell division and nuclear envelope reassembly by sequestering the endoplasmic reticulum away from chromosomes during mitosis. Probably acts by clearing the endoplasmic reticulum membrane from metaphase chromosomes. This chain is Receptor expression-enhancing protein 4 (REEP4), found in Pongo abelii (Sumatran orangutan).